Consider the following 117-residue polypeptide: Large ribosomal subunit protein bL19 (117 aa).

Belongs to the bacterial ribosomal protein bL19 family.

This protein is located at the 30S-50S ribosomal subunit interface and may play a role in the structure and function of the aminoacyl-tRNA binding site. The polypeptide is Large ribosomal subunit protein bL19 (Photorhabdus laumondii subsp. laumondii (strain DSM 15139 / CIP 105565 / TT01) (Photorhabdus luminescens subsp. laumondii)).